The following is a 219-amino-acid chain: Protoglabretal synthase ISM2 (219 aa).

Helical transmembrane passes span 26 to 46, 59 to 79, 112 to 132, 144 to 164, and 178 to 198; these read VHAWNGAATFLVMYGIWVLAG, LMIWWAVSGLIHIIHEGYWLF, AVVGIEGIAVIIVGPASLFAV, ILQLALALVQFYGSTLYFITA, and YYKYFIAQGGTWLLFPALIII. The 143-residue stretch at 55-197 folds into the EXPERA domain; the sequence is TDKWLMIWWA…TWLLFPALII (143 aa).

Belongs to the EBP family.

Its subcellular location is the membrane. It carries out the reaction 7,8-epoxymelianol = protoglabretal. It participates in secondary metabolite biosynthesis; terpenoid biosynthesis. In terms of biological role, isomerase involved in the biosynthesis of glabretanes triterpene natural products such as glabretal, a component with in vitro antiproliferative properties on lymphocytes. Catalyzes the conversion of 7,8-epoxymelianol to protoglabretal via skeletal rearrangements. This is Protoglabretal synthase ISM2 from Ailanthus altissima (Tree-of-heaven).